The primary structure comprises 555 residues: Glutamine--tRNA ligase (555 aa).

The 'HIGH' region signature appears at 34–44 (PEPNGYLHIGH). ATP is bound by residues 35 to 37 (EPN) and 41 to 47 (HIGHAKS). L-glutamine-binding residues include D67 and Y212. ATP contacts are provided by residues T231, 261–262 (RL), and 269–271 (MSK). Positions 268 to 272 (VMSKR) match the 'KMSKS' region motif.

Belongs to the class-I aminoacyl-tRNA synthetase family. In terms of assembly, monomer.

Its subcellular location is the cytoplasm. It carries out the reaction tRNA(Gln) + L-glutamine + ATP = L-glutaminyl-tRNA(Gln) + AMP + diphosphate. The polypeptide is Glutamine--tRNA ligase (Proteus mirabilis (strain HI4320)).